A 161-amino-acid chain; its full sequence is tRNA-acetylating toxin 1 (161 aa).

Residues leucine 92, valine 94, histidine 99, glycine 100, glycine 102, glycine 104, alanine 105, leucine 132, and glutamate 135 each contribute to the acetyl-CoA site. Residue tyrosine 140 is part of the active site. Histidine 142 is an acetyl-CoA binding site.

The protein belongs to the acetyltransferase family. GNAT subfamily. Homodimer (in absence of antitoxin). Forms a complex with cognate antitoxin TacA1. Forms a 4:2 antitoxin:toxin complex with cognate antitoxin TacA1.

The enzyme catalyses glycyl-tRNA(Gly) + acetyl-CoA = N-acetylglycyl-tRNA(Gly) + CoA + H(+). In terms of biological role, toxic component of a type II toxin-antitoxin (TA) system. Acetylates tRNA and inhibits translation, does not acetylate uncharged tRNA. Upon expression in situ acetylates only Gly-tRNA(Gly). In vitro acetylates mainly Gly and Ile/Leu. Upon induction of the toxin gene in lag phase in rich medium (but not mid-exponential phase) the lag phase is extended by several hours, locking bacteria in a non-growth state. Neutralized only by cognate antitoxin TacA1 (A8), but not by TacA2 or TacA3. Its toxic effect is neutralized by expression of peptidyl-tRNA hydrolase (pth) in lag phase. NAD-dependent protein deacylase (cobB) also play a role in detoxifying TacT targets. Expression increases persister cell formation, which is also abolished by either cognate antitoxin or Pth expression. Plays a role in persister cell formation. The TacA1-TacT1 complex binds (and probably represses) its own promoter DNA but not that of tacA3-tacT3, it does not repress the tacA3-tacT3 promoter. The protein is tRNA-acetylating toxin 1 of Salmonella typhimurium (strain 14028s / SGSC 2262).